The chain runs to 180 residues: Geminin homolog (180 aa).

Over residues 1–27 (MSRIGLQQLNNSARNSPFGSEKATGTK) the composition is skewed to polar residues. Residues 1 to 29 (MSRIGLQQLNNSARNSPFGSEKATGTKQI) are disordered.

This sequence belongs to the geminin family. Homodimer. Interacts with cdt-1; the interaction most likely inhibits the ability of cdt-1 to load the mini-chromosome maintenance (MCM) complex onto DNA and therefore reduces DNA replication licensing activity. Interacts with nob-1 and ceh-32.

It is found in the cytoplasm. The protein localises to the nucleus. Inhibits DNA replication by binding to the DNA replication licensing factor cdt-1. Its interaction with cdt-1 prevents the cdt-1 loading of the mini-chromosome maintenance (MCM) complex onto DNA and therefore DNA replication licencing. The polypeptide is Geminin homolog (Caenorhabditis elegans).